The following is a 206-amino-acid chain: MVSGSGICSKRVVVDARHHMLGRLASITAKELLNGQKVVIVRCEEICLSGGLVRQKMKYMRFLRKRMNTKPSHGPIHFRAPSKIFWRTVRGMIPHKTKRGAAALARLKVYEGVPTPYDKIKRMVIPDALKVLRLQAGHKYCLLGRLSSEVGWNHYDTIKELETKRKERAHVVYERKKQLNKLRVKAEKVAEEKLGAQLDILAPVKY.

The protein belongs to the universal ribosomal protein uL13 family.

In Arabidopsis thaliana (Mouse-ear cress), this protein is Large ribosomal subunit protein uL13w (RPL13AD).